Reading from the N-terminus, the 298-residue chain is Cholesterol 25-hydroxylase (298 aa).

N-linked (GlcNAc...) asparagine glycosylation is present at N5. 3 consecutive transmembrane segments (helical) span residues 38–58 (IFPV…FVVL), 88–108 (LGLT…LHWV), and 124–144 (LLSH…AWHL). A Fatty acid hydroxylase domain is found at 128 to 263 (VLICLLLFDT…FTHWDKMLGT (136 aa)). The Histidine box-1 motif lies at 142–146 (WHLLH). The Histidine box-2 motif lies at 157–161 (HKVHH). A glycan (N-linked (GlcNAc...) asparagine) is linked at N163. The Histidine box-3 motif lies at 238–244 (HHDMHHS).

Belongs to the sterol desaturase family. Fe cation serves as cofactor. In terms of processing, N-glycosylated. Widely expressed at low level and at higher level in the lung. Weakly expressed in the heart, lung and kidney.

The protein resides in the endoplasmic reticulum membrane. The enzyme catalyses cholesterol + AH2 + O2 = 25-hydroxycholesterol + A + H2O. The catalysed reaction is cholesterol + NADPH + O2 + H(+) = 25-hydroxycholesterol + NADP(+) + H2O. Functionally, catalyzes the formation of 25-hydroxycholesterol from cholesterol, leading to repress cholesterol biosynthetic enzymes. Plays a key role in cell positioning and movement in lymphoid tissues: 25-hydroxycholesterol is an intermediate in biosynthesis of 7-alpha,25-dihydroxycholesterol (7-alpha,25-OHC), an oxysterol that acts as a ligand for the G protein-coupled receptor GPR183/EBI2, a chemotactic receptor for a number of lymphoid cells. May play an important role in regulating lipid metabolism by synthesizing a corepressor that blocks sterol regulatory element binding protein (SREBP) processing. In testis, production of 25-hydroxycholesterol by macrophages may play a role in Leydig cell differentiation. Required to restrain inflammation in macrophages: production of 25-hydroxycholesterol protects macrophages from cholesterol overload, thereby preventing mitochondrial DNA release and subsequent activation of the AIM2 inflammasome. Interferon-stimulated gene which has broad antiviral activities against a wide range of enveloped viruses. This chain is Cholesterol 25-hydroxylase, found in Mus musculus (Mouse).